The primary structure comprises 247 residues: RNA polymerase sigma factor FliA (247 aa).

Residues 22–94 form a sigma-70 factor domain-2 region; it reads LIQRYAPLVK…MLDEVRKGDW (73 aa). The Interaction with polymerase core subunit RpoC signature appears at 49 to 52; that stretch reads DLMQ. Positions 102–171 are sigma-70 factor domain-3; the sequence is NTRMVTDAIR…GLPEDTSLSH (70 aa). Residues 190-238 are sigma-70 factor domain-4; sequence AIAKLPERERLVLALYYDEELNLKEIGEVLGVSESRVSQLHSQCAARLR. Residues 212-231 constitute a DNA-binding region (H-T-H motif); sequence LKEIGEVLGVSESRVSQLHS.

The protein belongs to the sigma-70 factor family. FliA subfamily.

It localises to the cytoplasm. Its function is as follows. Sigma factors are initiation factors that promote the attachment of RNA polymerase to specific initiation sites and are then released. This sigma factor controls the expression of flagella-related genes. Required for the flagellin gene (fliC) expression. This Pseudomonas aeruginosa (strain ATCC 15692 / DSM 22644 / CIP 104116 / JCM 14847 / LMG 12228 / 1C / PRS 101 / PAO1) protein is RNA polymerase sigma factor FliA.